Reading from the N-terminus, the 526-residue chain is 2-succinyl-5-enolpyruvyl-6-hydroxy-3-cyclohexene-1-carboxylate synthase (526 aa).

Belongs to the TPP enzyme family. MenD subfamily. In terms of assembly, homodimer. Mg(2+) serves as cofactor. The cofactor is Mn(2+). Requires thiamine diphosphate as cofactor.

The enzyme catalyses isochorismate + 2-oxoglutarate + H(+) = 5-enolpyruvoyl-6-hydroxy-2-succinyl-cyclohex-3-ene-1-carboxylate + CO2. It participates in quinol/quinone metabolism; 1,4-dihydroxy-2-naphthoate biosynthesis; 1,4-dihydroxy-2-naphthoate from chorismate: step 2/7. The protein operates within quinol/quinone metabolism; menaquinone biosynthesis. In terms of biological role, catalyzes the thiamine diphosphate-dependent decarboxylation of 2-oxoglutarate and the subsequent addition of the resulting succinic semialdehyde-thiamine pyrophosphate anion to isochorismate to yield 2-succinyl-5-enolpyruvyl-6-hydroxy-3-cyclohexene-1-carboxylate (SEPHCHC). This is 2-succinyl-5-enolpyruvyl-6-hydroxy-3-cyclohexene-1-carboxylate synthase from Bdellovibrio bacteriovorus (strain ATCC 15356 / DSM 50701 / NCIMB 9529 / HD100).